The following is a 520-amino-acid chain: Amine oxidase [flavin-containing] B (520 aa).

Residue Ser2 is modified to N-acetylserine. Residues 2–489 (SNKCDVIVVG…TFLERHLPSV (488 aa)) are Cytoplasmic-facing. Lys52 is modified (N6-acetyllysine). At Cys397 the chain carries S-8alpha-FAD cysteine. Residues 490–516 (PGLLKLLGLTTILSATALGFLAHKKGL) traverse the membrane as a helical; Anchor for type IV membrane protein segment. Residues 517-520 (FVRF) lie on the Mitochondrial intermembrane side of the membrane.

Belongs to the flavin monoamine oxidase family. As to quaternary structure, monomer, homo- or heterodimer (containing two subunits of similar size). Each subunit contains a covalently bound flavin. Enzymatically active as monomer. Requires FAD as cofactor.

It localises to the mitochondrion outer membrane. The enzyme catalyses a secondary aliphatic amine + O2 + H2O = a primary amine + an aldehyde + H2O2. It catalyses the reaction (R)-adrenaline + O2 + H2O = (R)-3,4-dihydroxymandelaldehyde + methylamine + H2O2. The catalysed reaction is a primary methyl amine + O2 + H2O = an aldehyde + H2O2 + NH4(+). It carries out the reaction dopamine + O2 + H2O = 3,4-dihydroxyphenylacetaldehyde + H2O2 + NH4(+). The enzyme catalyses tyramine + O2 + H2O = (4-hydroxyphenyl)acetaldehyde + H2O2 + NH4(+). It catalyses the reaction (R)-noradrenaline + O2 + H2O = (R)-3,4-dihydroxymandelaldehyde + H2O2 + NH4(+). The catalysed reaction is benzylamine + O2 + H2O = benzaldehyde + H2O2 + NH4(+). It carries out the reaction 2-phenylethylamine + O2 + H2O = 2-phenylacetaldehyde + H2O2 + NH4(+). The enzyme catalyses N-acetylputrescine + O2 + H2O = 4-acetamidobutanal + H2O2 + NH4(+). In terms of biological role, catalyzes the oxidative deamination of primary and some secondary amines such as neurotransmitters, and exogenous amines including the tertiary amine, neurotoxin 1-methyl-4-phenyl-1,2,3,6-tetrahydropyridine (MPTP), with concomitant reduction of oxygen to hydrogen peroxide and participates in the metabolism of neuroactive and vasoactive amines in the central nervous system and peripheral tissues. Preferentially degrades benzylamine and phenylethylamine. This chain is Amine oxidase [flavin-containing] B, found in Rattus norvegicus (Rat).